The following is a 472-amino-acid chain: Glutamate--tRNA ligase (472 aa).

The 'HIGH' region motif lies at 7 to 17 (PSPTGFLHVGG). Zn(2+) is bound by residues cysteine 96, cysteine 98, cysteine 123, and histidine 125. Over residues 112–129 (ARKEKPRYDGRCRHRSEP) the composition is skewed to basic and acidic residues. The tract at residues 112 to 134 (ARKEKPRYDGRCRHRSEPPSDQP) is disordered. A 'KMSKS' region motif is present at residues 234–238 (KLSKR). ATP is bound at residue lysine 237.

This sequence belongs to the class-I aminoacyl-tRNA synthetase family. Glutamate--tRNA ligase type 1 subfamily. Monomer. Zn(2+) serves as cofactor.

The protein localises to the cytoplasm. It carries out the reaction tRNA(Glu) + L-glutamate + ATP = L-glutamyl-tRNA(Glu) + AMP + diphosphate. In terms of biological role, catalyzes the attachment of glutamate to tRNA(Glu) in a two-step reaction: glutamate is first activated by ATP to form Glu-AMP and then transferred to the acceptor end of tRNA(Glu). This Magnetococcus marinus (strain ATCC BAA-1437 / JCM 17883 / MC-1) protein is Glutamate--tRNA ligase.